The sequence spans 579 residues: Fatty-acid amide hydrolase 1 (579 aa).

Residues 9–29 (ALPGASGVALACCFVAAAVAL) form a helical membrane-spanning segment. The Cytoplasmic segment spans residues 30–403 (RWSGRRTARG…GDFVDPCLGD (374 aa)). Lys142 (charge relay system) is an active-site residue. Substrate-binding positions include Met191, Ser217, and 238-241 (IGGS). Ser217 acts as the Charge relay system in catalysis. The active-site Acyl-ester intermediate is Ser241. Phosphoserine is present on Ser241. The stretch at 404-433 (LVSILKLPQWLKGLLAFLVKPLLPRLSAFL) is an intramembrane region. Topologically, residues 434 to 579 (SNMKSRSAGK…RLMTPEKQSS (146 aa)) are cytoplasmic.

It belongs to the amidase family. As to quaternary structure, homodimer. Highly expressed in the brain, small intestine, pancreas, skeletal muscle and testis. Also expressed in the kidney, liver, lung, placenta and prostate.

The protein resides in the endomembrane system. It is found in the cytoplasm. The protein localises to the cytoskeleton. It carries out the reaction N-(5Z,8Z,11Z,14Z-eicosatetraenoyl)-ethanolamine + H2O = ethanolamine + (5Z,8Z,11Z,14Z)-eicosatetraenoate. It catalyses the reaction (9Z)-octadecenamide + H2O = (9Z)-octadecenoate + NH4(+). The enzyme catalyses 2-(5Z,8Z,11Z,14Z-eicosatetraenoyl)-glycerol + H2O = glycerol + (5Z,8Z,11Z,14Z)-eicosatetraenoate + H(+). The catalysed reaction is N-(9Z-octadecenoyl) ethanolamine + H2O = ethanolamine + (9Z)-octadecenoate. It carries out the reaction N-hexadecanoylethanolamine + H2O = ethanolamine + hexadecanoate. It catalyses the reaction hexadecanamide + H2O = hexadecanoate + NH4(+). The enzyme catalyses tetradecamide + H2O = tetradecanoate + NH4(+). The catalysed reaction is N-(9Z-octadecenoyl)-taurine + H2O = taurine + (9Z)-octadecenoate. It carries out the reaction (9Z,12Z,15Z)-octadecatrienamide + H2O = (9Z,12Z,15Z)-octadecatrienoate + NH4(+). It catalyses the reaction (5Z,8Z,11Z,14Z)-eicosatetraenamide + H2O = (5Z,8Z,11Z,14Z)-eicosatetraenoate + NH4(+). The enzyme catalyses (6Z)-octadecenamide + H2O = (6Z)-octadecenoate + NH4(+). The catalysed reaction is (15Z)-tetracosenamide + H2O = (15Z)-tetracosenoate + NH4(+). It carries out the reaction (8Z,11Z,14Z)-eicosatrienamide + H2O = (8Z,11Z,14Z)-eicosatrienoate + NH4(+). It catalyses the reaction (11Z,14Z,17Z)-eicosatrienamide + H2O = (11Z,14Z,17Z)-eicosatrienoate + NH4(+). The enzyme catalyses (11Z,14Z)-eicosadienamide + H2O = (11Z,14Z)-eicosadienoate + NH4(+). The catalysed reaction is (9Z,12Z)-octadecadienamide + H2O = (9Z,12Z)-octadecadienoate + NH4(+). It carries out the reaction 1-O-methyl-(5Z,8Z,11Z,14Z)-eicosatetraenoate + H2O = methanol + (5Z,8Z,11Z,14Z)-eicosatetraenoate + H(+). It catalyses the reaction (11Z)-eicosenamide + H2O = (11Z)-eicosenoate + NH4(+). The enzyme catalyses N-(9Z-hexadecenoyl) ethanolamine + H2O = (9Z)-hexadecenoate + ethanolamine. The catalysed reaction is N-octadecanoyl ethanolamine + H2O = octadecanoate + ethanolamine. It carries out the reaction N-docosanoyl-ethanolamine + H2O = docosanoate + ethanolamine. It catalyses the reaction N-tetracosanoyl-taurine + H2O = tetracosanoate + taurine. The enzyme catalyses N-(15Z-tetracosenoyl)-ethanolamine + H2O = (15Z)-tetracosenoate + ethanolamine. The catalysed reaction is N-docosanoyl-taurine + H2O = docosanoate + taurine. It carries out the reaction N-(15Z-tetracosenoyl)-taurine + H2O = (15Z)-tetracosenoate + taurine. It catalyses the reaction N-tricosanoyl-taurine + H2O = tricosanoate + taurine. The enzyme catalyses (9Z)-octadecenoate + glycine = N-(9Z-octadecenoyl)glycine + H2O. The catalysed reaction is N-(5Z,8Z,11Z,14Z)-eicosatetraenoyl-glycine + H2O = (5Z,8Z,11Z,14Z)-eicosatetraenoate + glycine. It carries out the reaction N-(5Z,8Z,11Z,14Z-eicosatetraenoyl)-L-serine + H2O = (5Z,8Z,11Z,14Z)-eicosatetraenoate + L-serine. With respect to regulation, inhibited by O-aryl carbamates and alpha-keto heterocycles. Inhibited by trifluoromethyl ketone. Its function is as follows. Catalyzes the hydrolysis of endogenous amidated lipids like the sleep-inducing lipid oleamide ((9Z)-octadecenamide), the endocannabinoid anandamide (N-(5Z,8Z,11Z,14Z-eicosatetraenoyl)-ethanolamine), as well as other fatty amides, to their corresponding fatty acids, thereby regulating the signaling functions of these molecules. Hydrolyzes polyunsaturated substrate anandamide preferentially as compared to monounsaturated substrates. It can also catalyze the hydrolysis of the endocannabinoid 2-arachidonoylglycerol (2-(5Z,8Z,11Z,14Z-eicosatetraenoyl)-glycerol). FAAH cooperates with PM20D1 in the hydrolysis of amino acid-conjugated fatty acids such as N-fatty acyl glycine and N-fatty acyl-L-serine, thereby acting as a physiological regulator of specific subsets of intracellular, but not of extracellular, N-fatty acyl amino acids. In Homo sapiens (Human), this protein is Fatty-acid amide hydrolase 1 (FAAH).